A 146-amino-acid chain; its full sequence is 3-hydroxyacyl-[acyl-carrier-protein] dehydratase FabZ (146 aa).

Residue His-49 is part of the active site.

The protein belongs to the thioester dehydratase family. FabZ subfamily.

It localises to the cytoplasm. It catalyses the reaction a (3R)-hydroxyacyl-[ACP] = a (2E)-enoyl-[ACP] + H2O. Its function is as follows. Involved in unsaturated fatty acids biosynthesis. Catalyzes the dehydration of short chain beta-hydroxyacyl-ACPs and long chain saturated and unsaturated beta-hydroxyacyl-ACPs. In Pseudomonas fluorescens (strain ATCC BAA-477 / NRRL B-23932 / Pf-5), this protein is 3-hydroxyacyl-[acyl-carrier-protein] dehydratase FabZ.